The chain runs to 633 residues: MKTTTVACAVAGLLFSCVSGAPDPVHVEIQQRALPNAPDGYTPSTVGCPASRPTIRSAASLSPNETSWLETRRGKTTSAMKDFFNHVKIQDFDAAGYIDRHSSNSSDLPNIGIAVSGGGYRALMNGAGAIKAFDSRTPNSTSAGQLGGLLQSATYLSGLSGGSWLVGSIYINNFTTISALQTHQKGTVWQFQNSIFEGPDGGSIQILDSATYYRDISNAVSGKSDAGYPTSITDYWGRALSYQMINATNGGPSYTWSSIALTDAFQKAEMPMPLVVADGRYPGELLISSNATVYEFNPWEFGTFDPTVFGFAPLEYLGTKFNGGSVPSNESCVRGFDNVGFVMGTSSTLFNQFLLQINSTALPDWLKSVFTDILKDIGENDEDIAQYAPNPFYHFSNTTNPSAAELELDLVDGGEDLQNIPLHPLIQPERHVDVIFAVDSSADTTYSWPNGTALVATYERSLNSSGIANGTSFPAIPDQNTFVNKGLNTRPTFFGCNSSNTTGPSPLIVYLPNYPYTAYSNFSTFQPDYTEQERDSTILNGYDVVTMGNSTRDGNWSTCVGCAILSRSLERTNTNVPEICKQCFQRYCWDGSLNSTTPAGYEPVTILDSAASGIIPSISTVAMAVVFAAWTIF.

A signal peptide spans 1–20; that stretch reads MKTTTVACAVAGLLFSCVSG. One can recognise a PLA2c domain in the interval 47-594; it reads GCPASRPTIR…QRYCWDGSLN (548 aa). N-linked (GlcNAc...) asparagine glycans are attached at residues N64, N104, N139, N173, N246, N290, N329, N358, N397, N450, N463, N469, N497, N500, N521, N549, N555, and N594. S609 carries GPI-like-anchor amidated serine lipidation. Residues 610–633 constitute a propeptide, removed in mature form; it reads AASGIIPSISTVAMAVVFAAWTIF.

The protein belongs to the lysophospholipase family. Post-translationally, the GPI-like anchor contains a phosphoceramide lipid group. The anchor position has not been determined.

Its subcellular location is the cell membrane. It carries out the reaction a 1-acyl-sn-glycero-3-phosphocholine + H2O = sn-glycerol 3-phosphocholine + a fatty acid + H(+). Its function is as follows. Catalyzes the release of fatty acids from lysophospholipids. The polypeptide is Lysophospholipase 1 (plb1) (Aspergillus fumigatus (strain CBS 144.89 / FGSC A1163 / CEA10) (Neosartorya fumigata)).